A 200-amino-acid chain; its full sequence is Ribosome maturation factor RimP (200 aa).

The protein belongs to the RimP family.

It is found in the cytoplasm. Required for maturation of 30S ribosomal subunits. This Polaromonas sp. (strain JS666 / ATCC BAA-500) protein is Ribosome maturation factor RimP.